A 199-amino-acid chain; its full sequence is Urease accessory protein UreG (199 aa).

8 to 15 (GPVGSGKT) serves as a coordination point for GTP.

The protein belongs to the SIMIBI class G3E GTPase family. UreG subfamily. As to quaternary structure, homodimer. UreH, UreF and UreG form a complex that acts as a GTP-hydrolysis-dependent molecular chaperone, activating the urease apoprotein by helping to assemble the nickel containing metallocenter of UreC. The UreE protein probably delivers the nickel.

Its subcellular location is the cytoplasm. Functionally, facilitates the functional incorporation of the urease nickel metallocenter. This process requires GTP hydrolysis, probably effectuated by UreG. In Helicobacter pylori (strain G27), this protein is Urease accessory protein UreG.